The sequence spans 351 residues: Riboflavin-binding protein RibY (351 aa).

An N-terminal signal peptide occupies residues 1 to 19; sequence MMKLRVLTLGILIILLITA. C20 carries the N-palmitoyl cysteine lipid modification. C20 is lipidated: S-diacylglycerol cysteine.

It belongs to the NMT1 family. As to quaternary structure, the complex is likely composed of an ATP-binding protein, a transmembrane protein (RibX) and a solute-binding protein (RibY).

Its subcellular location is the cell membrane. Part of an ABC transporter complex that transports riboflavin into the cell. Binds riboflavin. The protein is Riboflavin-binding protein RibY of Chloroflexus aurantiacus (strain ATCC 29366 / DSM 635 / J-10-fl).